The chain runs to 278 residues: Truncated FRIGIDA-like protein 1 (278 aa).

Residues 1 to 36 (MTASETIATAINQIDEKKEKLKKAFDDLQAHRSLLS) adopt a coiled-coil conformation.

This sequence belongs to the Frigida family.

Truncated inactive FRIGIDA-like 1 protein. The polypeptide is Truncated FRIGIDA-like protein 1 (FRL1) (Arabidopsis thaliana (Mouse-ear cress)).